The chain runs to 278 residues: Large ribosomal subunit protein uL2 (278 aa).

The tract at residues 222 to 278 (GVVMNPVDHPHGGGEGRTSGGRHPVTPWGKPTKGAKTRKNKSTDKFIIRSRHERKKR) is disordered. Residues 269 to 278 (IRSRHERKKR) show a composition bias toward basic residues.

Belongs to the universal ribosomal protein uL2 family. As to quaternary structure, part of the 50S ribosomal subunit. Forms a bridge to the 30S subunit in the 70S ribosome.

One of the primary rRNA binding proteins. Required for association of the 30S and 50S subunits to form the 70S ribosome, for tRNA binding and peptide bond formation. It has been suggested to have peptidyltransferase activity; this is somewhat controversial. Makes several contacts with the 16S rRNA in the 70S ribosome. The polypeptide is Large ribosomal subunit protein uL2 (Maricaulis maris (strain MCS10) (Caulobacter maris)).